The following is a 706-amino-acid chain: Elongation factor G (706 aa).

One can recognise a tr-type G domain in the interval 8-295 (ERYRNFGIMA…AVIDYLPSPL (288 aa)). Residues 17 to 24 (AHIDAGKT), 92 to 96 (DTPGH), and 146 to 149 (NKMD) contribute to the GTP site.

This sequence belongs to the TRAFAC class translation factor GTPase superfamily. Classic translation factor GTPase family. EF-G/EF-2 subfamily.

It is found in the cytoplasm. Catalyzes the GTP-dependent ribosomal translocation step during translation elongation. During this step, the ribosome changes from the pre-translocational (PRE) to the post-translocational (POST) state as the newly formed A-site-bound peptidyl-tRNA and P-site-bound deacylated tRNA move to the P and E sites, respectively. Catalyzes the coordinated movement of the two tRNA molecules, the mRNA and conformational changes in the ribosome. The chain is Elongation factor G from Jannaschia sp. (strain CCS1).